Here is a 122-residue protein sequence, read N- to C-terminus: Large ribosomal subunit protein bL12 (122 aa).

It belongs to the bacterial ribosomal protein bL12 family. Homodimer. Part of the ribosomal stalk of the 50S ribosomal subunit. Forms a multimeric L10(L12)X complex, where L10 forms an elongated spine to which 2 to 4 L12 dimers bind in a sequential fashion. Binds GTP-bound translation factors.

In terms of biological role, forms part of the ribosomal stalk which helps the ribosome interact with GTP-bound translation factors. Is thus essential for accurate translation. The protein is Large ribosomal subunit protein bL12 of Mesoplasma florum (strain ATCC 33453 / NBRC 100688 / NCTC 11704 / L1) (Acholeplasma florum).